Here is a 238-residue protein sequence, read N- to C-terminus: Dolichyldiphosphatase 1 (238 aa).

Helical transmembrane passes span leucine 33–phenylalanine 53, proline 100–leucine 120, phenylalanine 130–valine 150, and tryptophan 162–isoleucine 182.

It belongs to the dolichyldiphosphatase family. As to expression, widely expressed with highest levels in brain, kidney, lung and intestine.

The protein resides in the endoplasmic reticulum membrane. It carries out the reaction a di-trans,poly-cis-dolichyl diphosphate + H2O = a di-trans,poly-cis-dolichyl phosphate + phosphate + H(+). The protein operates within protein modification; protein glycosylation. Functionally, required for efficient N-glycosylation. Necessary for maintaining optimal levels of dolichol-linked oligosaccharides. Hydrolyzes dolichyl pyrophosphate at a very high rate and dolichyl monophosphate at a much lower rate. Does not act on phosphatidate. The sequence is that of Dolichyldiphosphatase 1 (Dolpp1) from Mus musculus (Mouse).